The following is a 499-amino-acid chain: Uridine-cytidine kinase A (499 aa).

The tract at residues M1–T44 is disordered. Low complexity predominate over residues T10–T38. G78–T85 serves as a coordination point for ATP.

Belongs to the uridine kinase family.

The enzyme catalyses uridine + ATP = UMP + ADP + H(+). It carries out the reaction cytidine + ATP = CMP + ADP + H(+). It functions in the pathway pyrimidine metabolism; CTP biosynthesis via salvage pathway; CTP from cytidine: step 1/3. The protein operates within pyrimidine metabolism; UMP biosynthesis via salvage pathway; UMP from uridine: step 1/1. Catalyzes the conversion of uridine into uridine monophosphate and cytidine into cytidine monophosphate in the pyrimidine salvage pathway. The protein is Uridine-cytidine kinase A (udkA) of Dictyostelium discoideum (Social amoeba).